Here is a 292-residue protein sequence, read N- to C-terminus: Ribosomal protein L11 methyltransferase (292 aa).

T144, G165, D187, and N229 together coordinate S-adenosyl-L-methionine.

The protein belongs to the methyltransferase superfamily. PrmA family.

The protein localises to the cytoplasm. It catalyses the reaction L-lysyl-[protein] + 3 S-adenosyl-L-methionine = N(6),N(6),N(6)-trimethyl-L-lysyl-[protein] + 3 S-adenosyl-L-homocysteine + 3 H(+). Methylates ribosomal protein L11. The polypeptide is Ribosomal protein L11 methyltransferase (Azotobacter vinelandii (strain DJ / ATCC BAA-1303)).